A 78-amino-acid polypeptide reads, in one-letter code: Small ribosomal subunit protein bS16c (78 aa).

It belongs to the bacterial ribosomal protein bS16 family.

Its subcellular location is the plastid. It localises to the chloroplast. This is Small ribosomal subunit protein bS16c from Amborella trichopoda.